We begin with the raw amino-acid sequence, 388 residues long: LL-diaminopimelate aminotransferase (388 aa).

Positions 13, 38, 102, 126, and 176 each coordinate substrate. Pyridoxal 5'-phosphate is bound by residues 101-102, Tyr126, Asn176, Tyr207, and 235-237; these read SK and SLS. Lys238 carries the N6-(pyridoxal phosphate)lysine modification. Arg246 provides a ligand contact to pyridoxal 5'-phosphate. Residue Arg364 participates in substrate binding.

Belongs to the class-I pyridoxal-phosphate-dependent aminotransferase family. LL-diaminopimelate aminotransferase subfamily. As to quaternary structure, homodimer. Pyridoxal 5'-phosphate serves as cofactor.

The catalysed reaction is (2S,6S)-2,6-diaminopimelate + 2-oxoglutarate = (S)-2,3,4,5-tetrahydrodipicolinate + L-glutamate + H2O + H(+). It functions in the pathway amino-acid biosynthesis; L-lysine biosynthesis via DAP pathway; LL-2,6-diaminopimelate from (S)-tetrahydrodipicolinate (aminotransferase route): step 1/1. Functionally, involved in the synthesis of meso-diaminopimelate (m-DAP or DL-DAP), required for both lysine and peptidoglycan biosynthesis. Catalyzes the direct conversion of tetrahydrodipicolinate to LL-diaminopimelate. The protein is LL-diaminopimelate aminotransferase of Dehalococcoides mccartyi (strain ATCC BAA-2266 / KCTC 15142 / 195) (Dehalococcoides ethenogenes (strain 195)).